Reading from the N-terminus, the 1074-residue chain is KSPAMPVPGPMGPMGPRSGPQGFPGEAGAAGAMGPRGPAGPPGKNGEDGESGKPGRGGERGPPGPQGARGFPGTPGLPGMKGHRGFSGLDGAKGDSGPAGPKGESGAPGENGTPGAMGPRGLPGERGRTGAAGAAGARGNDGAAGAAGPPGPTGPAGPPGFPGGPGAKGDAGAQGGRGPEGPAGARGEPGNPGPAGAAGPSGNPGTDGAAGPKGTPGAAGVAGAPGFPGPRGPSGPQGAAGAPGPKGNTGEVGAPGAKGEAGAKGEAGAPGVQGPPGPSGEEGKRGARGEPGAAGARGAPGERGGPGGRGFPGSDGPAGPKGATGERGAPGAVGPKGSTGESGRGMTGSPGSPGPDGKTGPAGPSGQDGRPGPPGPVGARGQPGVMGFPGPKGAAGEGGKPGERGVMGPTGAAGAPGKDGDVGAPGPSGPAGPAGERGEQGPAGAPGFQGLPGPQGALGETGKPGEQGVPGEAGATGPAGARGDRGAPGALGPAGARGSPGSAGNDGAKGDAGAPGAPGAQGPPGLQGMPGERGAAGLPGLRGDRGDQGAKGADGAPGKDGPRGLTGPLGLPGPAGATGDKGEPGPAGPVGPGGARGAPGERGESGPPGPAGFAGPPGADGQPGAKGEAGDNGAKGDAGPPGAAGPTGAPGPQGPVGNTGPKGARGAAGPPGATGFPGAAGRVGPPGPSGNPGPPGPAGGTGKEGPKGNRGETGPAGRPGELGAAGPPGPAGEKGSPGSEGATGSAGLPGPQGLAGQRGLVGLPGQRGERGFSGLPGPAGEPGKPGPSGPGGERGPPGPMGPPGLAGAPGEPGREGSPGSEGSAGRDGAAGPKGDRGESGPSGAPGAPGPPGAPGPVGPAGKNGDRGETGPAGPAGSAGPAGPRGPAGAPGLRGDKGESGEAGERGHRGFTGMQGPPGPSGSSGEQGPAGAAGPAGPRGPAGSAGSPGKDGMSGLPGPTGPPGPRGRSGEMGPAGPPGPPGPPGAPGAPGGGFDLGFLSQPQEKAPDPYRDRDLEVDSTLKSLSQQLEQLRSPDGTRFTYSVLEDGCTSHTGTWGKVGAPDQEFGLEVGPVCFL.

Residues 1–13 (KSPAMPVPGPMGP) are compositionally biased toward pro residues. Residues 1–1010 (KSPAMPVPGP…PQEKAPDPYR (1010 aa)) are disordered. Low complexity predominate over residues 14–36 (MGPRSGPQGFPGEAGAAGAMGPR). A compositionally biased stretch (basic and acidic residues) spans 45–59 (NGEDGESGKPGRGGE). Residues 129-147 (TGAAGAAGARGNDGAAGAA) are compositionally biased toward low complexity. The segment covering 149 to 162 (PPGPTGPAGPPGFP) has biased composition (pro residues). Gly residues predominate over residues 163-181 (GGPGAKGDAGAQGGRGPEG). Low complexity-rich tracts occupy residues 182–225 (PAGA…AGAP), 234–272 (SGPQ…APGV), and 290–299 (EPGAAGARGA). Residues 301–313 (GERGGPGGRGFPG) show a composition bias toward gly residues. 3 stretches are compositionally biased toward low complexity: residues 377 to 392 (VGAR…PGPK), 469 to 530 (VPGE…QGMP), and 563 to 578 (RGLT…AGAT). Gly residues predominate over residues 588–597 (GPVGPGGARG). 2 stretches are compositionally biased toward low complexity: residues 611–647 (AGFA…AGPT) and 661–683 (PKGA…AGRV). Pro residues predominate over residues 685–697 (PPGPSGNPGPPGP). Low complexity-rich tracts occupy residues 715-742 (PAGR…SEGA) and 803-823 (PGLA…SEGS). Residues 847–857 (APGPPGAPGPV) are compositionally biased toward pro residues. Residues 871–890 (PAGPAGSAGPAGPRGPAGAP) show a composition bias toward low complexity. Residues 893–907 (RGDKGESGEAGERGH) are compositionally biased toward basic and acidic residues. Over residues 920–956 (SGSSGEQGPAGAAGPAGPRGPAGSAGSPGKDGMSGLP) the composition is skewed to low complexity. The segment covering 974 to 986 (AGPPGPPGPPGAP) has biased composition (pro residues). In terms of domain architecture, Fibrillar collagen NC1 spans 1014–1074 (LEVDSTLKSL…GLEVGPVCFL (61 aa)).

This sequence belongs to the fibrillar collagen family.

Its subcellular location is the secreted. The protein localises to the extracellular space. It is found in the extracellular matrix. The protein is Collagen, type I, alpha 1a of Epinephelus marginatus (Dusky grouper).